Reading from the N-terminus, the 227-residue chain is MKNIQGAVFDLYGTLYDVNSVAQVCEEVYSGHGDSISRLWRQKQLEYTWLRSLMGRYVNFEKATEDALRFTCTHLGLSLDDETHQRLSDAYLHLTPYADTADALRRLKAAGLPVGIISNGSHCSIEQVVTNSEMNWAFDQLISVEDVQVFKPDSRVYSLAEKRMGFPKENILFVSSNAWDASAASNFGFPVCWINRQNGAFDELDAKPTHVVRNLAEMSNWLVNSLD.

The active-site Nucleophile is D10. Residues 11–12 (LY), R41, and 118–119 (SN) contribute to the an (S)-2-haloacid site. The tract at residues 175 to 180 (SSNAWD) is important for catalytic activity.

This sequence belongs to the HAD-like hydrolase superfamily. S-2-haloalkanoic acid dehalogenase family.

It carries out the reaction an (S)-2-haloacid + H2O = a (2R)-2-hydroxycarboxylate + a halide anion + H(+). It catalyses the reaction (S)-2-chloropropanoate + H2O = (R)-lactate + chloride + H(+). Functionally, catalyzes the hydrolytic dehalogenation of small (S)-2-haloalkanoic acids to yield the corresponding (R)-2-hydroxyalkanoic acids. Acts on acids of short chain lengths, C(2) to C(4), with inversion of configuration at C-2. Active with 2-halogenated carboxylic acids and converts only the S-isomer (or L-isomer) of 2-chloropropionic acid with inversion of configuration to produce R-lactate (or D-isomer). The chain is (S)-2-haloacid dehalogenase (dhl VII) from Pseudomonas fluorescens.